Reading from the N-terminus, the 356-residue chain is Heat-inducible transcription repressor HrcA (356 aa).

It belongs to the HrcA family.

Its function is as follows. Negative regulator of class I heat shock genes (grpE-dnaK-dnaJ and groELS operons). Prevents heat-shock induction of these operons. This is Heat-inducible transcription repressor HrcA from Chlorobaculum tepidum (strain ATCC 49652 / DSM 12025 / NBRC 103806 / TLS) (Chlorobium tepidum).